We begin with the raw amino-acid sequence, 466 residues long: Asparagine--tRNA ligase (466 aa).

This sequence belongs to the class-II aminoacyl-tRNA synthetase family. As to quaternary structure, homodimer.

It is found in the cytoplasm. The catalysed reaction is tRNA(Asn) + L-asparagine + ATP = L-asparaginyl-tRNA(Asn) + AMP + diphosphate + H(+). The protein is Asparagine--tRNA ligase of Vibrio parahaemolyticus serotype O3:K6 (strain RIMD 2210633).